We begin with the raw amino-acid sequence, 328 residues long: DNA-directed RNA polymerase subunit alpha (328 aa).

The segment at 1-232 is alpha N-terminal domain (alpha-NTD); it reads MSTQGFLKPR…DQISVFAALE (232 aa). The tract at residues 248 to 328 is alpha C-terminal domain (alpha-CTD); that stretch reads IDPVLLRPVD…NWPPLGLERP (81 aa).

The protein belongs to the RNA polymerase alpha chain family. As to quaternary structure, homodimer. The RNAP catalytic core consists of 2 alpha, 1 beta, 1 beta' and 1 omega subunit. When a sigma factor is associated with the core the holoenzyme is formed, which can initiate transcription.

It carries out the reaction RNA(n) + a ribonucleoside 5'-triphosphate = RNA(n+1) + diphosphate. In terms of biological role, DNA-dependent RNA polymerase catalyzes the transcription of DNA into RNA using the four ribonucleoside triphosphates as substrates. This is DNA-directed RNA polymerase subunit alpha from Bordetella bronchiseptica (strain ATCC BAA-588 / NCTC 13252 / RB50) (Alcaligenes bronchisepticus).